The chain runs to 301 residues: Glycine--tRNA ligase alpha subunit (301 aa).

Belongs to the class-II aminoacyl-tRNA synthetase family. In terms of assembly, tetramer of two alpha and two beta subunits.

The protein localises to the cytoplasm. It carries out the reaction tRNA(Gly) + glycine + ATP = glycyl-tRNA(Gly) + AMP + diphosphate. The protein is Glycine--tRNA ligase alpha subunit of Glaesserella parasuis serovar 5 (strain SH0165) (Haemophilus parasuis).